The following is a 439-amino-acid chain: Nuclear distribution protein PAC1 (439 aa).

Residues 55-90 (NSIVRLQSKIMELEKNCEELQKSIDEQQSSTNQISN) adopt a coiled-coil conformation. 7 WD repeats span residues 106–145 (TLDA…LPLQ), 149–193 (AHMD…TLSH), 199–240 (GHEH…CIKS), 243–282 (PHTQ…SMGI), 295–335 (IPDP…FIPH), 355–392 (DHNS…LSTT), and 402–438 (NKGF…TSFM).

This sequence belongs to the WD repeat LIS1/nudF family. In terms of assembly, self-associates. Interacts with NDL1 and dynein.

It localises to the cytoplasm. The protein resides in the cytoskeleton. The protein localises to the spindle pole. Functionally, positively regulates the activity of the minus-end directed microtubule motor protein dynein. Plays a central role in positioning the mitotic spindle at the bud neck during cell division. Targets cytoplasmic dynein to microtubule plus ends, thereby promoting dynein-mediated microtubule sliding along the bud cortex and consequently the movement of the mitotic spindle to the bud neck. In Kluyveromyces lactis (strain ATCC 8585 / CBS 2359 / DSM 70799 / NBRC 1267 / NRRL Y-1140 / WM37) (Yeast), this protein is Nuclear distribution protein PAC1.